A 314-amino-acid chain; its full sequence is Electron transfer flavoprotein subunit alpha (314 aa).

253–281 (LYVAVGISGAIQHLAGMKDSKVIVAINKD) is a binding site for FAD.

The protein belongs to the ETF alpha-subunit/FixB family. In terms of assembly, heterodimer of an alpha and a beta subunit. Requires FAD as cofactor.

Its function is as follows. The electron transfer flavoprotein serves as a specific electron acceptor for other dehydrogenases. It transfers the electrons to the main respiratory chain via ETF-ubiquinone oxidoreductase (ETF dehydrogenase). This Bradyrhizobium diazoefficiens (strain JCM 10833 / BCRC 13528 / IAM 13628 / NBRC 14792 / USDA 110) protein is Electron transfer flavoprotein subunit alpha (etfA).